Reading from the N-terminus, the 799-residue chain is Cadherin-8 (799 aa).

Residues 1–29 form the signal peptide; it reads MPERLAEMLLDLWTPLIILWITLPPCIYM. Residues 30–61 constitute a propeptide that is removed on maturation; sequence APMNQSQVLMSGSPLELNSLGEEQRILNRSKR. Asparagine 33 and asparagine 57 each carry an N-linked (GlcNAc...) asparagine glycan. 5 Cadherin domains span residues 62–167, 168–276, 277–391, 392–494, and 495–616; these read GWVW…APEF, LNGP…PPKF, AQSL…PPVF, SSPT…DNAP, and EFAS…YVLP. The Extracellular portion of the chain corresponds to 62 to 621; sequence GWVWNQMFVL…AYVLPIGLSM (560 aa). N-linked (GlcNAc...) asparagine glycosylation occurs at asparagine 188. N-linked (GlcNAc...) asparagine glycosylation is found at asparagine 463, asparagine 473, and asparagine 544. The helical transmembrane segment at 622–642 threads the bilayer; it reads GALIAILACIILLLVIVVLFV. Residues 643–799 lie on the Cytoplasmic side of the membrane; it reads TLRRHKNEPL…YSVGESDKET (157 aa). Serine 795 is subject to Phosphoserine.

As to expression, mainly expressed in brain. Found in certain nerve cell lines, such as retinoblasts, glioma cells and neuroblasts.

It localises to the cell membrane. In terms of biological role, cadherins are calcium-dependent cell adhesion proteins. They preferentially interact with themselves in a homophilic manner in connecting cells; cadherins may thus contribute to the sorting of heterogeneous cell types. The sequence is that of Cadherin-8 (CDH8) from Homo sapiens (Human).